The sequence spans 362 residues: Chorismate synthase (362 aa).

The NADP(+) site is built by Arg-48 and Arg-54. FMN is bound by residues 125–127 (RSS), 237–238 (NA), Gly-277, 292–296 (KPTSS), and Arg-318.

It belongs to the chorismate synthase family. As to quaternary structure, homotetramer. The cofactor is FMNH2.

The enzyme catalyses 5-O-(1-carboxyvinyl)-3-phosphoshikimate = chorismate + phosphate. It participates in metabolic intermediate biosynthesis; chorismate biosynthesis; chorismate from D-erythrose 4-phosphate and phosphoenolpyruvate: step 7/7. Functionally, catalyzes the anti-1,4-elimination of the C-3 phosphate and the C-6 proR hydrogen from 5-enolpyruvylshikimate-3-phosphate (EPSP) to yield chorismate, which is the branch point compound that serves as the starting substrate for the three terminal pathways of aromatic amino acid biosynthesis. This reaction introduces a second double bond into the aromatic ring system. The chain is Chorismate synthase from Idiomarina loihiensis (strain ATCC BAA-735 / DSM 15497 / L2-TR).